A 65-amino-acid chain; its full sequence is Large ribosomal subunit protein bL32 (65 aa).

Positions 1 to 45 (MAVQQNKKTPSKRGMRRAHDVLKKPTFSVDFSSGETHRRHHVTPD) are disordered.

This sequence belongs to the bacterial ribosomal protein bL32 family.

The polypeptide is Large ribosomal subunit protein bL32 (Nitrosococcus oceani (strain ATCC 19707 / BCRC 17464 / JCM 30415 / NCIMB 11848 / C-107)).